The sequence spans 1025 residues: Error-prone DNA polymerase (1025 aa).

It belongs to the DNA polymerase type-C family. DnaE2 subfamily.

The protein resides in the cytoplasm. The enzyme catalyses DNA(n) + a 2'-deoxyribonucleoside 5'-triphosphate = DNA(n+1) + diphosphate. Its function is as follows. DNA polymerase involved in damage-induced mutagenesis and translesion synthesis (TLS). It is not the major replicative DNA polymerase. This Pseudomonas fluorescens (strain Pf0-1) protein is Error-prone DNA polymerase.